The following is a 290-amino-acid chain: Short chain dehydrogenase/reductase nsrO (290 aa).

NADP(+) contacts are provided by Ile37 and Lys149. Active-site proton donor residues include Ser168 and Tyr182. The NADP(+) site is built by Tyr182, Lys186, and Thr221. Lys186 serves as the catalytic Lowers pKa of active site Tyr.

This sequence belongs to the short-chain dehydrogenases/reductases (SDR) family.

Its pathway is secondary metabolite biosynthesis. In terms of biological role, short chain dehydrogenase/reductase; part of the gene cluster that mediates the biosynthesis of the tetrahydroxanthone dimer neosartorin, which exhibits antibacterial activity. The two different monomeric units appear to be synthesized by the same set of enzymes, among which the Baeyer-Villiger monooxygenase nsrF is the key enzyme for the divergence of the biosynthetic routes. The pathway begins with the synthesis of atrochrysone thioester by the polyketide synthase nsrB. The atrochrysone carboxyl ACP thioesterase nsrC then breaks the thioester bond and releases the atrochrysone carboxylic acid from AacuL. Atrochrysone carboxylic acid is decarboxylated by the decarboxylase nsrE, and oxidized by the anthrone oxygenase nsrD to yield emodin. Emodin is then reduced to emodin hydroquinone by the oxidoreductase nsrR. A-ring reduction by the short chain dehydrogenase nsrJ, dehydration by the scytalone dehydratase-like protein nsrI and probable spontaneous re-oxidation, results in overall deoxygenation to chrysophanol. The Baeyer-Villiger monooxygenase nsrF accepts chrysophanol as a substrate to insert one oxygen atom at two different positions to yield the precursors of both monomric units. NsrF is promiscuous/flexible in interacting with the 2 (non methylated and methylated) aromatic rings of chrysophanol, thus diverging the biosynthetic pathway at this point. After the hydrolysis of the lactones, methylesterification by the methyltransferase nsrG yields respectively moniliphenone and 2,2',6'-trihydroxy-4-methyl-6-methoxya-cyldiphenylmethanone. The next steps are the hydroxylation by the FAD-dependent monooxygenase nsrK, followed by isomerization by the monooxygenase nsrQ. The short chain dehydrogenase/reductase nsrO then catalyzes the C-5 ketoreduction to give the xanthone skeleton of blennolide C and 5-acetylblennolide A. The acetyltransferase nsrL has a strict substrate specificity and uses only blennolide A but not blennolide C to yield 5-acetylblennolide A as the single-acetylated product. In the final step of the biosynthesis, the heterodimerization of the 2 xanthones, blennolide C and 5-acetylblennolide A, is catalyzed by the cytochrome P450 monooxygenase nsrP. NsrP can utilize at least three different xanthones as its substrates to perform the dimerization reaction. This chain is Short chain dehydrogenase/reductase nsrO, found in Aspergillus novofumigatus (strain IBT 16806).